The sequence spans 210 residues: UPF0301 protein CPS_1252 (210 aa).

Belongs to the UPF0301 (AlgH) family.

The polypeptide is UPF0301 protein CPS_1252 (Colwellia psychrerythraea (strain 34H / ATCC BAA-681) (Vibrio psychroerythus)).